A 792-amino-acid polypeptide reads, in one-letter code: Chloride channel protein CLC-d (792 aa).

12 helical membrane passes run 78-98 (FFSL…NLSV), 119-139 (AGFI…AYII), 170-190 (RTLI…LALG), 195-215 (LVHT…TKYH), 237-257 (GCAA…LFAL), 267-287 (QLMW…RTAM), 320-340 (LLPM…FNQL), 361-381 (IIEA…LPLL), 451-471 (LLTF…TAVP), 474-494 (QFVP…MFVV), 508-528 (ALLG…SLCV), and 529-549 (IMVE…VLLI). CBS domains lie at 592–652 (QSQK…KVDF) and 704–761 (LNPS…SSAV). Residues 731-751 (HLFVVPRPSRVIGLITRKDLL) form a helical membrane-spanning segment.

Belongs to the chloride channel (TC 2.A.49) family. As to quaternary structure, homodimer. In terms of tissue distribution, broadly expressed in the plant, but predominantly in the silique.

Its subcellular location is the membrane. In terms of biological role, voltage-gated chloride channel. In Arabidopsis thaliana (Mouse-ear cress), this protein is Chloride channel protein CLC-d (CLC-D).